The primary structure comprises 429 residues: Trigger factor (429 aa).

The 86-residue stretch at 163–248 folds into the PPIase FKBP-type domain; the sequence is GDFVVIDFVG…IKEIKVKETP (86 aa).

It belongs to the FKBP-type PPIase family. Tig subfamily.

The protein resides in the cytoplasm. It catalyses the reaction [protein]-peptidylproline (omega=180) = [protein]-peptidylproline (omega=0). Involved in protein export. Acts as a chaperone by maintaining the newly synthesized protein in an open conformation. Functions as a peptidyl-prolyl cis-trans isomerase. This chain is Trigger factor, found in Halothermothrix orenii (strain H 168 / OCM 544 / DSM 9562).